We begin with the raw amino-acid sequence, 238 residues long: NADH-quinone oxidoreductase subunit C (238 aa).

Over residues 1–11 (MSTSNGSANGT) the composition is skewed to polar residues. The disordered stretch occupies residues 1-20 (MSTSNGSANGTNGVGLPRGD).

The protein belongs to the complex I 30 kDa subunit family. In terms of assembly, NDH-1 is composed of 14 different subunits. Subunits NuoB, C, D, E, F, and G constitute the peripheral sector of the complex.

The protein resides in the cell membrane. The enzyme catalyses a quinone + NADH + 5 H(+)(in) = a quinol + NAD(+) + 4 H(+)(out). In terms of biological role, NDH-1 shuttles electrons from NADH, via FMN and iron-sulfur (Fe-S) centers, to quinones in the respiratory chain. The immediate electron acceptor for the enzyme in this species is believed to be a menaquinone. Couples the redox reaction to proton translocation (for every two electrons transferred, four hydrogen ions are translocated across the cytoplasmic membrane), and thus conserves the redox energy in a proton gradient. This is NADH-quinone oxidoreductase subunit C from Mycolicibacterium smegmatis (strain ATCC 700084 / mc(2)155) (Mycobacterium smegmatis).